Consider the following 276-residue polypeptide: Plant cysteine oxidase 2 (276 aa).

Positions 1 to 40 (MGTDTVMSGRVRKDLSKTNPNGNIPENRSNSRKKIQRRSK) are disordered. Residues 17-28 (KTNPNGNIPENR) show a composition bias toward polar residues. Over residues 30 to 40 (NSRKKIQRRSK) the composition is skewed to basic residues. Residues histidine 134, histidine 136, and histidine 197 each contribute to the Fe cation site.

Belongs to the cysteine dioxygenase family. Fe(2+) is required as a cofactor.

The protein localises to the nucleus. Its subcellular location is the cytoplasm. It carries out the reaction L-cysteine + O2 = 3-sulfino-L-alanine + H(+). In terms of biological role, catalyzes the oxidation of N-terminal cysteine residues (N-Cys), thus preparing the protein for N-end rule pathway-mediated proteasomal degradation, upstream of the N-end rule enzymes ATE1, ATE2 and PRT6. Controls the preparation of the group VII ethylene response factor (ERF-VII) proteins for degradation via the 26S proteasome N-end rule pathway. Acts as an oxygen sensor that controls the stability of ERF-VII proteins, which are stabilized in flooding-induced hypoxia, and regulate transcriptional adaptation to these adverse conditions. Not active on Cys located inside or at the C-terminus of a peptide. Acts redundantly with PCO1 to repress the anaerobic response. The chain is Plant cysteine oxidase 2 from Arabidopsis thaliana (Mouse-ear cress).